The primary structure comprises 137 residues: uncharacterized protein (137 aa).

A run of 4 helical transmembrane segments spans residues 14–34 (AVVVAILLYIFIILVVDGSIS), 48–68 (YHIIEFYDFIHIIGFLLSLSI), 84–104 (FFTIFFGITFILGITLFLGLT), and 109–129 (HIPSMRGYTTLMLFFFLLNLF).

The protein localises to the cell membrane. This is an uncharacterized protein from Methanocaldococcus jannaschii (strain ATCC 43067 / DSM 2661 / JAL-1 / JCM 10045 / NBRC 100440) (Methanococcus jannaschii).